A 155-amino-acid chain; its full sequence is uncharacterized protein (155 aa).

The span at 28 to 38 (KKGKDRPREDG) shows a compositional bias: basic and acidic residues. A disordered region spans residues 28-52 (KKGKDRPREDGTQQQPSESKGEAAC).

This is an uncharacterized protein from Dryophytes versicolor (chameleon treefrog).